We begin with the raw amino-acid sequence, 435 residues long: Trigger factor (435 aa).

The PPIase FKBP-type domain maps to 163-248; that stretch reads GELASVTFSA…VHAVKERKMP (86 aa).

Belongs to the FKBP-type PPIase family. Tig subfamily.

Its subcellular location is the cytoplasm. The enzyme catalyses [protein]-peptidylproline (omega=180) = [protein]-peptidylproline (omega=0). In terms of biological role, involved in protein export. Acts as a chaperone by maintaining the newly synthesized protein in an open conformation. Functions as a peptidyl-prolyl cis-trans isomerase. The chain is Trigger factor from Maridesulfovibrio salexigens (strain ATCC 14822 / DSM 2638 / NCIMB 8403 / VKM B-1763) (Desulfovibrio salexigens).